A 149-amino-acid polypeptide reads, in one-letter code: Inner membrane protein YidI (149 aa).

Over 1 to 8 the chain is Cytoplasmic; sequence MGIIAQNK. The chain crosses the membrane as a helical span at residues 9 to 31; the sequence is ISSLGMLFGAIALMMGIIHFSFG. Residues 32–77 lie on the Periplasmic side of the membrane; that stretch reads PFSAPPPTFESIVADKTAEIKRGLLAGIKGEKITTVEKKEDVDVDK. The helical transmembrane segment at 78–97 threads the bilayer; sequence ILNQSGIALAIAALLCAFIG. Residues 98–117 lie on the Cytoplasmic side of the membrane; the sequence is GMRKENRWGIRGALVFGGGT. A helical transmembrane segment spans residues 118–140; the sequence is LAFHTLLFGIGIVCSILLIFLIF. The Periplasmic segment spans residues 141-149; sequence SFLTGGSLV.

It is found in the cell inner membrane. The sequence is that of Inner membrane protein YidI (yidI) from Escherichia coli (strain K12).